A 271-amino-acid polypeptide reads, in one-letter code: Thiazole synthase (271 aa).

Lys-95 (schiff-base intermediate with DXP) is an active-site residue. 1-deoxy-D-xylulose 5-phosphate contacts are provided by residues Gly-156, 182-183 (AG), and 204-205 (NT).

This sequence belongs to the ThiG family. Homotetramer. Forms heterodimers with either ThiH or ThiS.

It localises to the cytoplasm. It catalyses the reaction [ThiS sulfur-carrier protein]-C-terminal-Gly-aminoethanethioate + 2-iminoacetate + 1-deoxy-D-xylulose 5-phosphate = [ThiS sulfur-carrier protein]-C-terminal Gly-Gly + 2-[(2R,5Z)-2-carboxy-4-methylthiazol-5(2H)-ylidene]ethyl phosphate + 2 H2O + H(+). It functions in the pathway cofactor biosynthesis; thiamine diphosphate biosynthesis. Functionally, catalyzes the rearrangement of 1-deoxy-D-xylulose 5-phosphate (DXP) to produce the thiazole phosphate moiety of thiamine. Sulfur is provided by the thiocarboxylate moiety of the carrier protein ThiS. In vitro, sulfur can be provided by H(2)S. In Yersinia pestis, this protein is Thiazole synthase.